We begin with the raw amino-acid sequence, 172 residues long: Lipoprotein signal peptidase (172 aa).

Transmembrane regions (helical) follow at residues 4–24 (LSSS…LDQV), 39–59 (VAIL…AFSF), 69–89 (WFFT…LAKL), and 93–113 (WTLE…NVID). Active-site residues include Asp122 and Asp140. A helical membrane pass occupies residues 136–156 (FNVADMGISIGAVLLIISEFW).

Belongs to the peptidase A8 family.

The protein resides in the cell inner membrane. It carries out the reaction Release of signal peptides from bacterial membrane prolipoproteins. Hydrolyzes -Xaa-Yaa-Zaa-|-(S,diacylglyceryl)Cys-, in which Xaa is hydrophobic (preferably Leu), and Yaa (Ala or Ser) and Zaa (Gly or Ala) have small, neutral side chains.. It participates in protein modification; lipoprotein biosynthesis (signal peptide cleavage). In terms of biological role, this protein specifically catalyzes the removal of signal peptides from prolipoproteins. The sequence is that of Lipoprotein signal peptidase from Hydrogenovibrio crunogenus (strain DSM 25203 / XCL-2) (Thiomicrospira crunogena).